The following is a 490-amino-acid chain: NAI2-like protein (490 aa).

An N-terminal signal peptide occupies residues 1 to 24 (MGRKYVVLGLAVCLFLSSFNEVSC). Disordered regions lie at residues 43–83 (EEGE…VDKF) and 155–206 (AATN…FNKG). Residues 136–163 (IADERRQRLEDIERKLKAAAATNIVVED) are a coiled coil. A compositionally biased stretch (basic and acidic residues) spans 171 to 183 (KVEETQEVVKFES). A compositionally biased stretch (low complexity) spans 184 to 199 (ESSSASSESRRQSSSS). A coiled-coil region spans residues 433 to 465 (TFEKTVANLSRVIEEASQAYEEYHVVVRKWKEE).

The polypeptide is NAI2-like protein (Arabidopsis thaliana (Mouse-ear cress)).